The chain runs to 460 residues: MATGKIVQVIGAVVDVEFPQDAVPRVYDALAVQNGNERLVLEVQQQLGGGIVRTIAMGSSDGLRRGLDVKDLEHPIEVPVGKATLGRIMNVLGEPVDMKGEIGEEERWAIHRAAPSYEELSNSQELLETGIKVIDLMCPFAKGGKVGLFGGAGVGKTVNMMELIRNIAIEHSGYSVFAGVGERTREGNDFYHEMTDSNVIDKVSLVYGQMNEPPGNRLRVALTGLTMAEKFRDEGRDVLLFVDNIYRYTLAGTEVSALLGRMPSAVGYQPTLAEEMGVLQERITSTKTGSITSVQAVYVPADDLTDPSPATTFAHLDATVVLSRQIASLGIYPAVDPLDSTSRQLDPLVVGQEHYDTARGVQSILQRYQELKDIIAILGMDELSEEDKLVVARARKIQRFLSQPFFVAEVFTGSPGKYVSLKDTIRGFKGIMEGEYDHLPEQAFYMVGSIEEAVEKAKKL.

An ATP-binding site is contributed by 150–157 (GGAGVGKT).

It belongs to the ATPase alpha/beta chains family. F-type ATPases have 2 components, CF(1) - the catalytic core - and CF(0) - the membrane proton channel. CF(1) has five subunits: alpha(3), beta(3), gamma(1), delta(1), epsilon(1). CF(0) has three main subunits: a(1), b(2) and c(9-12). The alpha and beta chains form an alternating ring which encloses part of the gamma chain. CF(1) is attached to CF(0) by a central stalk formed by the gamma and epsilon chains, while a peripheral stalk is formed by the delta and b chains.

It is found in the cell inner membrane. The catalysed reaction is ATP + H2O + 4 H(+)(in) = ADP + phosphate + 5 H(+)(out). In terms of biological role, produces ATP from ADP in the presence of a proton gradient across the membrane. The catalytic sites are hosted primarily by the beta subunits. This is ATP synthase subunit beta from Shigella dysenteriae serotype 1 (strain Sd197).